Reading from the N-terminus, the 103-residue chain is Large ribosomal subunit protein bL21 (103 aa).

This sequence belongs to the bacterial ribosomal protein bL21 family. As to quaternary structure, part of the 50S ribosomal subunit. Contacts protein L20.

Its function is as follows. This protein binds to 23S rRNA in the presence of protein L20. This chain is Large ribosomal subunit protein bL21, found in Haemophilus ducreyi (strain 35000HP / ATCC 700724).